Here is a 142-residue protein sequence, read N- to C-terminus: Glycine-rich RNA-binding protein 1 (142 aa).

One can recognise an RRM domain in the interval 1–65 (NSLHSAFSTY…RNITVNEAQS (65 aa)). The tract at residues 48 to 101 (MNGKELDGRNITVNEAQSRGGRGGGGGGGYGGGRGGGGGYGRRDGGGGGYGGGG) is disordered. Residues 67-101 (GGRGGGGGGGYGGGRGGGGGYGRRDGGGGGYGGGG) show a composition bias toward gly residues.

Possibly has a role in RNA transcription or processing during stress. This is Glycine-rich RNA-binding protein 1 (GRP1) from Sorghum bicolor (Sorghum).